A 151-amino-acid chain; its full sequence is Putative coiled-coil-helix-coiled-coil-helix domain-containing protein CHCHD2P9, mitochondrial (151 aa).

A mitochondrion-targeting transit peptide spans 1-9 (MPRGSRSRT). Disordered stretches follow at residues 1-50 (MPRG…AAAP) and 75-110 (TQGH…PAQQ). Residues 10-26 (SRMAPPASRAPQMRAAP) are compositionally biased toward low complexity. The span at 27 to 38 (RPAPVAQPPAAA) shows a compositional bias: pro residues. 2 stretches are compositionally biased toward low complexity: residues 39-50 (PPSAVGSSAAAP) and 100-110 (QEPQGTQPAQQ). The 41-residue stretch at 111–151 (QQPCFYGIKQFLECAQNQGDIKLCEDFSKVLKQCRLAKGLA) folds into the CHCH domain. Short sequence motifs (cx9C motif) lie at residues 114–124 (CFYGIKQFLEC) and 134–144 (CEDFSKVLKQC). 2 disulfides stabilise this stretch: Cys114–Cys144 and Cys124–Cys134.

The protein localises to the mitochondrion. The polypeptide is Putative coiled-coil-helix-coiled-coil-helix domain-containing protein CHCHD2P9, mitochondrial (CHCHD2P9) (Homo sapiens (Human)).